A 309-amino-acid polypeptide reads, in one-letter code: 4-hydroxy-3-methylbut-2-enyl diphosphate reductase (309 aa).

Cys12 is a [4Fe-4S] cluster binding site. 2 residues coordinate (2E)-4-hydroxy-3-methylbut-2-enyl diphosphate: His43 and His77. Dimethylallyl diphosphate is bound by residues His43 and His77. Residues His43 and His77 each contribute to the isopentenyl diphosphate site. Residue Cys99 participates in [4Fe-4S] cluster binding. Residue His127 coordinates (2E)-4-hydroxy-3-methylbut-2-enyl diphosphate. His127 provides a ligand contact to dimethylallyl diphosphate. Residue His127 participates in isopentenyl diphosphate binding. The active-site Proton donor is the Glu129. Thr167 is a (2E)-4-hydroxy-3-methylbut-2-enyl diphosphate binding site. Position 197 (Cys197) interacts with [4Fe-4S] cluster. 4 residues coordinate (2E)-4-hydroxy-3-methylbut-2-enyl diphosphate: Ser225, Ser226, Asn227, and Ser269. Dimethylallyl diphosphate is bound by residues Ser225, Ser226, Asn227, and Ser269. 4 residues coordinate isopentenyl diphosphate: Ser225, Ser226, Asn227, and Ser269.

It belongs to the IspH family. It depends on [4Fe-4S] cluster as a cofactor.

It carries out the reaction isopentenyl diphosphate + 2 oxidized [2Fe-2S]-[ferredoxin] + H2O = (2E)-4-hydroxy-3-methylbut-2-enyl diphosphate + 2 reduced [2Fe-2S]-[ferredoxin] + 2 H(+). It catalyses the reaction dimethylallyl diphosphate + 2 oxidized [2Fe-2S]-[ferredoxin] + H2O = (2E)-4-hydroxy-3-methylbut-2-enyl diphosphate + 2 reduced [2Fe-2S]-[ferredoxin] + 2 H(+). It functions in the pathway isoprenoid biosynthesis; dimethylallyl diphosphate biosynthesis; dimethylallyl diphosphate from (2E)-4-hydroxy-3-methylbutenyl diphosphate: step 1/1. It participates in isoprenoid biosynthesis; isopentenyl diphosphate biosynthesis via DXP pathway; isopentenyl diphosphate from 1-deoxy-D-xylulose 5-phosphate: step 6/6. In terms of biological role, catalyzes the conversion of 1-hydroxy-2-methyl-2-(E)-butenyl 4-diphosphate (HMBPP) into a mixture of isopentenyl diphosphate (IPP) and dimethylallyl diphosphate (DMAPP). Acts in the terminal step of the DOXP/MEP pathway for isoprenoid precursor biosynthesis. In Wolbachia pipientis wMel, this protein is 4-hydroxy-3-methylbut-2-enyl diphosphate reductase.